A 315-amino-acid chain; its full sequence is Acyl transferase (315 aa).

Residues S116, D213, and H243 each act as charge relay system in the active site.

The protein belongs to the LuxD family.

Its pathway is lipid metabolism; fatty acid reduction for biolumincescence. Acyl transferase is part of the fatty acid reductase system required for aldehyde biosynthesis; it produces fatty acids for the luminescent reaction. The protein is Acyl transferase of Photobacterium leiognathi.